The primary structure comprises 783 residues: Galactinol--sucrose galactosyltransferase (783 aa).

This sequence belongs to the glycosyl hydrolases 36 family.

The catalysed reaction is alpha-D-galactosyl-(1-&gt;3)-1D-myo-inositol + sucrose = raffinose + myo-inositol. Inhibited by Ag(2)+, Hg(2+), Zn(2+), p-chloromercuribenzoate (pCMB) and 1-deoxygalactonojirimycin. Transglycosidase operating by a ping-pong reaction mechanism. Involved in the synthesis of raffinose, a major soluble carbohydrate in seeds, roots and tubers. Specific for galactinol and p-nitrophenyl-alpha-D-galactoside as galactosyl donors. Able to utilize sucrose, lactose, 4-beta-galactobiose, N-acetyl-D-lactosamine, trehalose and lacto-N-biose as acceptors. May also act as a glycoside hydrolase. The protein is Galactinol--sucrose galactosyltransferase (RFS) of Oryza sativa subsp. japonica (Rice).